Consider the following 162-residue polypeptide: Cyclic pyranopterin monophosphate synthase (162 aa).

Substrate contacts are provided by residues 75–77 (LCH) and 113–114 (ME). Residue D128 is part of the active site.

Belongs to the MoaC family. In terms of assembly, homohexamer; trimer of dimers.

The enzyme catalyses (8S)-3',8-cyclo-7,8-dihydroguanosine 5'-triphosphate = cyclic pyranopterin phosphate + diphosphate. It participates in cofactor biosynthesis; molybdopterin biosynthesis. Catalyzes the conversion of (8S)-3',8-cyclo-7,8-dihydroguanosine 5'-triphosphate to cyclic pyranopterin monophosphate (cPMP). The protein is Cyclic pyranopterin monophosphate synthase of Burkholderia ambifaria (strain ATCC BAA-244 / DSM 16087 / CCUG 44356 / LMG 19182 / AMMD) (Burkholderia cepacia (strain AMMD)).